Here is an 86-residue protein sequence, read N- to C-terminus: Small ribosomal subunit protein bS16 (86 aa).

Belongs to the bacterial ribosomal protein bS16 family.

The chain is Small ribosomal subunit protein bS16 from Trichormus variabilis (strain ATCC 29413 / PCC 7937) (Anabaena variabilis).